A 319-amino-acid chain; its full sequence is Acetyl-coenzyme A carboxylase carboxyl transferase subunit alpha (319 aa).

Positions 35-296 constitute a CoA carboxyltransferase C-terminal domain; it reads NIDEEVHRLR…KAQLLTDLAD (262 aa).

Belongs to the AccA family. As to quaternary structure, acetyl-CoA carboxylase is a heterohexamer composed of biotin carboxyl carrier protein (AccB), biotin carboxylase (AccC) and two subunits each of ACCase subunit alpha (AccA) and ACCase subunit beta (AccD).

It is found in the cytoplasm. It catalyses the reaction N(6)-carboxybiotinyl-L-lysyl-[protein] + acetyl-CoA = N(6)-biotinyl-L-lysyl-[protein] + malonyl-CoA. Its pathway is lipid metabolism; malonyl-CoA biosynthesis; malonyl-CoA from acetyl-CoA: step 1/1. Component of the acetyl coenzyme A carboxylase (ACC) complex. First, biotin carboxylase catalyzes the carboxylation of biotin on its carrier protein (BCCP) and then the CO(2) group is transferred by the carboxyltransferase to acetyl-CoA to form malonyl-CoA. In Escherichia coli O45:K1 (strain S88 / ExPEC), this protein is Acetyl-coenzyme A carboxylase carboxyl transferase subunit alpha.